Consider the following 132-residue polypeptide: Small ribosomal subunit protein uS8 (132 aa).

It belongs to the universal ribosomal protein uS8 family. Part of the 30S ribosomal subunit. Contacts proteins S5 and S12.

In terms of biological role, one of the primary rRNA binding proteins, it binds directly to 16S rRNA central domain where it helps coordinate assembly of the platform of the 30S subunit. The chain is Small ribosomal subunit protein uS8 from Flavobacterium psychrophilum (strain ATCC 49511 / DSM 21280 / CIP 103535 / JIP02/86).